The sequence spans 114 residues: Large ribosomal subunit protein bL20 (114 aa).

The protein belongs to the bacterial ribosomal protein bL20 family.

Binds directly to 23S ribosomal RNA and is necessary for the in vitro assembly process of the 50S ribosomal subunit. It is not involved in the protein synthesizing functions of that subunit. This chain is Large ribosomal subunit protein bL20, found in Flavobacterium johnsoniae (strain ATCC 17061 / DSM 2064 / JCM 8514 / BCRC 14874 / CCUG 350202 / NBRC 14942 / NCIMB 11054 / UW101) (Cytophaga johnsonae).